Consider the following 412-residue polypeptide: Cytochrome P450-SOY (412 aa).

Residues 1-25 (MTESTTDPARQNLDPTSPAPATSFP) are compositionally biased toward polar residues. A disordered region spans residues 1-38 (MTESTTDPARQNLDPTSPAPATSFPQDRGCPYHPPAGY). Cys361 is a binding site for heme.

The protein belongs to the cytochrome P450 family. Requires heme as cofactor.

It localises to the cytoplasm. The sequence is that of Cytochrome P450-SOY (cyp105D1) from Streptomyces griseus.